Consider the following 301-residue polypeptide: Acetylglutamate kinase (301 aa).

Substrate is bound by residues 72-73, R94, and N199; that span reads GG.

It belongs to the acetylglutamate kinase family. ArgB subfamily.

The protein resides in the cytoplasm. The catalysed reaction is N-acetyl-L-glutamate + ATP = N-acetyl-L-glutamyl 5-phosphate + ADP. The protein operates within amino-acid biosynthesis; L-arginine biosynthesis; N(2)-acetyl-L-ornithine from L-glutamate: step 2/4. In terms of biological role, catalyzes the ATP-dependent phosphorylation of N-acetyl-L-glutamate. In Bartonella tribocorum (strain CIP 105476 / IBS 506), this protein is Acetylglutamate kinase.